A 318-amino-acid chain; its full sequence is Transaldolase (318 aa).

Lysine 132 acts as the Schiff-base intermediate with substrate in catalysis.

It belongs to the transaldolase family. Type 1 subfamily. In terms of assembly, homodimer.

The protein localises to the cytoplasm. It catalyses the reaction D-sedoheptulose 7-phosphate + D-glyceraldehyde 3-phosphate = D-erythrose 4-phosphate + beta-D-fructose 6-phosphate. The protein operates within carbohydrate degradation; pentose phosphate pathway; D-glyceraldehyde 3-phosphate and beta-D-fructose 6-phosphate from D-ribose 5-phosphate and D-xylulose 5-phosphate (non-oxidative stage): step 2/3. Functionally, transaldolase is important for the balance of metabolites in the pentose-phosphate pathway. The chain is Transaldolase from Shewanella sp. (strain MR-7).